Reading from the N-terminus, the 188-residue chain is Segregation and condensation protein B (188 aa).

Belongs to the ScpB family. In terms of assembly, homodimer. Homodimerization may be required to stabilize the binding of ScpA to the Smc head domains. Component of a cohesin-like complex composed of ScpA, ScpB and the Smc homodimer, in which ScpA and ScpB bind to the head domain of Smc. The presence of the three proteins is required for the association of the complex with DNA.

The protein localises to the cytoplasm. Its function is as follows. Participates in chromosomal partition during cell division. May act via the formation of a condensin-like complex containing Smc and ScpA that pull DNA away from mid-cell into both cell halves. The sequence is that of Segregation and condensation protein B from Lactococcus lactis subsp. cremoris (strain MG1363).